Here is a 144-residue protein sequence, read N- to C-terminus: Catabolic 3-dehydroquinase (144 aa).

Tyrosine 24 functions as the Proton acceptor in the catalytic mechanism. Asparagine 76, histidine 82, and aspartate 89 together coordinate substrate. Residue histidine 102 is the Proton donor of the active site. Residues isoleucine 103–threonine 104 and arginine 113 each bind substrate.

Belongs to the type-II 3-dehydroquinase family. As to quaternary structure, homododecamer. Adopts a ring-like structure, composed of an arrangement of two hexameric rings stacked on top of one another.

It carries out the reaction 3-dehydroquinate = 3-dehydroshikimate + H2O. It functions in the pathway aromatic compound metabolism; 3,4-dihydroxybenzoate biosynthesis; 3,4-dihydroxybenzoate from 3-dehydroquinate: step 1/2. Functionally, is involved in the catabolism of quinate. Allows the utilization of quinate as carbon source via the beta-ketoadipate pathway. The polypeptide is Catabolic 3-dehydroquinase (Debaryomyces hansenii (strain ATCC 36239 / CBS 767 / BCRC 21394 / JCM 1990 / NBRC 0083 / IGC 2968) (Yeast)).